Reading from the N-terminus, the 81-residue chain is Photosystem I iron-sulfur center (81 aa).

4Fe-4S ferredoxin-type domains lie at 2-31 and 37-68; these read SHAV…MVPW and GQIA…IRVY. [4Fe-4S] cluster-binding residues include C11, C14, C17, C21, C48, C51, C54, and C58.

The cyanobacterial PSI reaction center is composed of one copy each of PsaA,B,C,D,E,F,I,J,K,L,M and X, and forms trimeric complexes. [4Fe-4S] cluster serves as cofactor.

It is found in the cellular thylakoid membrane. It catalyses the reaction reduced [plastocyanin] + hnu + oxidized [2Fe-2S]-[ferredoxin] = oxidized [plastocyanin] + reduced [2Fe-2S]-[ferredoxin]. Functionally, apoprotein for the two 4Fe-4S centers FA and FB of photosystem I (PSI); essential for photochemical activity. FB is the terminal electron acceptor of PSI, donating electrons to ferredoxin. The C-terminus interacts with PsaA/B/D and helps assemble the protein into the PSI complex. Required for binding of PsaD and PsaE to PSI. PSI is a plastocyanin/cytochrome c6-ferredoxin oxidoreductase, converting photonic excitation into a charge separation, which transfers an electron from the donor P700 chlorophyll pair to the spectroscopically characterized acceptors A0, A1, FX, FA and FB in turn. In Synechococcus sp. (strain WH8103), this protein is Photosystem I iron-sulfur center.